The primary structure comprises 286 residues: Protease HtpX homolog (286 aa).

The next 2 membrane-spanning stretches (helical) occupy residues 7–27 (TFML…MIGG) and 29–49 (SGMM…YWFS). H131 provides a ligand contact to Zn(2+). E132 is an active-site residue. H135 contributes to the Zn(2+) binding site. The next 2 helical transmembrane spans lie at 146 to 166 (LSAT…FFGG) and 177 to 197 (IAGI…QMAI). E202 is a Zn(2+) binding site.

Belongs to the peptidase M48B family. Requires Zn(2+) as cofactor.

Its subcellular location is the cell inner membrane. The protein is Protease HtpX homolog of Ralstonia nicotianae (strain ATCC BAA-1114 / GMI1000) (Ralstonia solanacearum).